The sequence spans 448 residues: Chromogranin-A (448 aa).

The first 18 residues, 1-18 (MRSAVVLALLLCAGQVIA), serve as a signal peptide directing secretion. An intrachain disulfide couples Cys-35 to Cys-56. The tract at residues 116 to 251 (LKEVTEEALS…AFNPHPSLSY (136 aa)) is disordered. 2 stretches are compositionally biased toward basic and acidic residues: residues 129–139 (AEARGDSKEVE) and 158–175 (QESR…KEAI). Ser-197 carries the post-translational modification Phosphoserine. The segment covering 205-222 (VDREKGLGAERGQQAKRE) has biased composition (basic and acidic residues). The segment covering 223–238 (EEEDEAGEKADAEEEG) has biased composition (acidic residues). Residues Ser-258 and Ser-288 each carry the phosphoserine modification. The disordered stretch occupies residues 263-429 (LVVDGARKTG…PEDQELESLS (167 aa)). A Glycine amide modification is found at Gly-308. A compositionally biased stretch (basic and acidic residues) spans 310–350 (KSRELEQEKEQERLSKEWEDAKRWSKMDQLAKELTAEKRLE). Ser-311, Ser-324, and Ser-362 each carry phosphoserine. Methionine sulfoxide is present on Met-363. Phosphoserine is present on residues Ser-389, Ser-393, Ser-415, and Ser-429. A compositionally biased stretch (basic and acidic residues) spans 405 to 422 (YPEEKKEEEGSANRRPED). A glycan (O-linked (Xyl...) (chondroitin sulfate) serine) is linked at Ser-415.

It belongs to the chromogranin/secretogranin protein family. In terms of assembly, self-interacts; self-assembly is promoted in vitro by chondroitin sulfate attachment which occurs at mildly acidic pH conditions. Interacts with SCG3. Interacts with ITPR1 in the secretory granules. In terms of processing, O-glycosylated; contains chondroitin sulfate (CS). CS attachment is pH-dependent, being observed at mildly acidic conditions of pH 5 but not at neutral pH, and promotes self-assembly in vitro. Highly expressed in adrenal medulla and pituitary gland. Weaker expression detected in cerebrum, cerebellum, spinal cord, liver, thyroid gland, striated muscle, lung, spleen, kidney, parotid gland, and sublingual gland.

The protein resides in the secreted. Its subcellular location is the cytoplasmic vesicle. It localises to the secretory vesicle. It is found in the neuronal dense core vesicle. Its function is as follows. Strongly inhibits glucose induced insulin release from the pancreas. Functionally, inhibits catecholamine release from chromaffin cells and noradrenergic neurons by acting as a non-competitive nicotinic cholinergic antagonist. Can induce mast cell migration, degranulation and production of cytokines and chemokines. In terms of biological role, regulates granule biogenesis in endocrine cells by up-regulating the transcription of protease nexin 1 (SERPINE2) via a cAMP-PKA-SP1 pathway. This leads to inhibition of granule protein degradation in the Golgi complex which in turn promotes granule formation. This Equus caballus (Horse) protein is Chromogranin-A (CHGA).